Here is a 610-residue protein sequence, read N- to C-terminus: DNA mismatch repair protein MutL (610 aa).

Residues G351–A406 are disordered.

The protein belongs to the DNA mismatch repair MutL/HexB family.

Its function is as follows. This protein is involved in the repair of mismatches in DNA. It is required for dam-dependent methyl-directed DNA mismatch repair. May act as a 'molecular matchmaker', a protein that promotes the formation of a stable complex between two or more DNA-binding proteins in an ATP-dependent manner without itself being part of a final effector complex. The polypeptide is DNA mismatch repair protein MutL (Rhizobium etli (strain ATCC 51251 / DSM 11541 / JCM 21823 / NBRC 15573 / CFN 42)).